The chain runs to 233 residues: Superoxide dismutase [Mn] 3.3, mitochondrial (233 aa).

A mitochondrion-targeting transit peptide spans 1 to 29 (MALRTLASKNALSFALGGAARPSAESARG). Positions 57, 105, 194, and 198 each coordinate Mn(2+).

Belongs to the iron/manganese superoxide dismutase family. In terms of assembly, homotetramer. It depends on Mn(2+) as a cofactor. In terms of tissue distribution, predominantly expressed in the embryo late in embryogenesis.

It is found in the mitochondrion matrix. It catalyses the reaction 2 superoxide + 2 H(+) = H2O2 + O2. Functionally, destroys superoxide anion radicals which are normally produced within the cells and which are toxic to biological systems. This chain is Superoxide dismutase [Mn] 3.3, mitochondrial (SODA.2), found in Zea mays (Maize).